Consider the following 122-residue polypeptide: MENVYENSYMIVGIFLLLGILLPVVALTLGKLLRPHKPSEAKNTTYESGIEPYHDANVRFHARYYIFALLFVIFDVETLFLYPWAVAYDKLGLFALIEMLIFVAMLLIGLAYAWKKKVLQWL.

3 helical membrane-spanning segments follow: residues 10-30 (MIVGIFLLLGILLPVVALTLG), 66-86 (IFALLFVIFDVETLFLYPWAV), and 91-111 (LGLFALIEMLIFVAMLLIGLA).

The protein belongs to the complex I subunit 3 family. NDH-1 is composed of 14 different subunits. Subunits NuoA, H, J, K, L, M, N constitute the membrane sector of the complex.

The protein localises to the cell membrane. The enzyme catalyses a quinone + NADH + 5 H(+)(in) = a quinol + NAD(+) + 4 H(+)(out). In terms of biological role, NDH-1 shuttles electrons from NADH, via FMN and iron-sulfur (Fe-S) centers, to quinones in the respiratory chain. The immediate electron acceptor for the enzyme in this species is believed to be a menaquinone. Couples the redox reaction to proton translocation (for every two electrons transferred, four hydrogen ions are translocated across the cytoplasmic membrane), and thus conserves the redox energy in a proton gradient. The sequence is that of NADH-quinone oxidoreductase subunit A from Bacillus cytotoxicus (strain DSM 22905 / CIP 110041 / 391-98 / NVH 391-98).